Reading from the N-terminus, the 180-residue chain is Free methionine-R-sulfoxide reductase (180 aa).

One can recognise a GAF domain in the interval glycine 99–cysteine 177.

This sequence belongs to the free Met sulfoxide reductase family.

The protein resides in the cytoplasm. It is found in the nucleus. The catalysed reaction is [thioredoxin]-disulfide + L-methionine + H2O = L-methionine (R)-S-oxide + [thioredoxin]-dithiol. Catalyzes the reversible oxidation-reduction of the R-enantiomer of free methionine sulfoxide to methionine. Does not act on S-enantiomer of free methionine sulfoxide or R-enantiomer of dabsylated methionine sulfoxide. Involved in protection against oxidative stress. This is Free methionine-R-sulfoxide reductase from Saccharomyces cerevisiae (strain ATCC 204508 / S288c) (Baker's yeast).